We begin with the raw amino-acid sequence, 102 residues long: Aspartyl/glutamyl-tRNA(Asn/Gln) amidotransferase subunit C (102 aa).

It belongs to the GatC family. As to quaternary structure, heterotrimer of A, B and C subunits.

It catalyses the reaction L-glutamyl-tRNA(Gln) + L-glutamine + ATP + H2O = L-glutaminyl-tRNA(Gln) + L-glutamate + ADP + phosphate + H(+). It carries out the reaction L-aspartyl-tRNA(Asn) + L-glutamine + ATP + H2O = L-asparaginyl-tRNA(Asn) + L-glutamate + ADP + phosphate + 2 H(+). Functionally, allows the formation of correctly charged Asn-tRNA(Asn) or Gln-tRNA(Gln) through the transamidation of misacylated Asp-tRNA(Asn) or Glu-tRNA(Gln) in organisms which lack either or both of asparaginyl-tRNA or glutaminyl-tRNA synthetases. The reaction takes place in the presence of glutamine and ATP through an activated phospho-Asp-tRNA(Asn) or phospho-Glu-tRNA(Gln). The chain is Aspartyl/glutamyl-tRNA(Asn/Gln) amidotransferase subunit C from Bordetella parapertussis (strain 12822 / ATCC BAA-587 / NCTC 13253).